The primary structure comprises 391 residues: MVQHHQAAANDDHQAIPLLTPYKQAGRPGSKLDLSHRVLLAPMTRCRSYGNVPQPHAALYYTQRATRGGLLITEATGVSATAQGYPETPGVRTREHVEAWKPIVDAVHRKGALFICQLWHVGRVSNNGFQPDGLAPISSTDKAITPDGYGMVYSKPRRLRTDEIPQIVDDFRLAARNAVEAGFDGVEIHGANGYLLEQFMKDSSNDRTDEYGGSLENRCRFAVEVIDAVVGEIGAHSVGIRLSPFLDYMDCVDSDPEALGSYMVEQLNKHEDFLYCHMVEPRMAIVDGRRQIQHGLLPFRKQFNGTFIAAGGYDREEGNKAVADGYADLVAYGRLFLANPDLPKRFELDAPMNNYDRNTFYTQDPVVGYTDYPFLDEHHHDDDDDSNAPSA.

FMN contacts are provided by residues 42 to 44 (PMT), alanine 75, and glutamine 117. Position 189 to 192 (189 to 192 (HGAN)) interacts with substrate. Tyrosine 194 acts as the Proton donor in catalysis. Position 241 (arginine 241) interacts with FMN. Residue arginine 282 participates in substrate binding. Residues glycine 312 and 333-334 (GR) each bind FMN. Residues 372–391 (YPFLDEHHHDDDDDSNAPSA) are disordered. A compositionally biased stretch (acidic residues) spans 382-391 (DDDDSNAPSA).

This sequence belongs to the NADH:flavin oxidoreductase/NADH oxidase family. It depends on FMN as a cofactor.

In terms of biological role, putative oxophytodienoate reductase that may be involved in the biosynthesis or metabolism of oxylipin signaling molecules. The chain is Putative 12-oxophytodienoate reductase 6 (OPR6) from Oryza sativa subsp. japonica (Rice).